Reading from the N-terminus, the 296-residue chain is Ribosomal RNA small subunit methyltransferase H (296 aa).

S-adenosyl-L-methionine is bound by residues 38–40, glutamate 57, phenylalanine 80, aspartate 103, and histidine 110; that span reads GVH.

Belongs to the methyltransferase superfamily. RsmH family.

It is found in the cytoplasm. The enzyme catalyses cytidine(1402) in 16S rRNA + S-adenosyl-L-methionine = N(4)-methylcytidine(1402) in 16S rRNA + S-adenosyl-L-homocysteine + H(+). Specifically methylates the N4 position of cytidine in position 1402 (C1402) of 16S rRNA. This Borreliella burgdorferi (strain ATCC 35210 / DSM 4680 / CIP 102532 / B31) (Borrelia burgdorferi) protein is Ribosomal RNA small subunit methyltransferase H.